We begin with the raw amino-acid sequence, 439 residues long: MHRYFERVNRISYEGRQSNNPLAFRHYNPEEIILGKKMKDHLRFAVCYWHNFCWDGTDMFGSGAFERFWQKGGDALELAKLKADVAFEFFYKLNIPFYCFHDIDVAPEGCSLKEYIYNLGVMSDILADKQAETGVKLLWGTANCFTHPRYAAGASTNPDLNIFAYASAQVCQVMQMTKKLGGENYVLWGGREGYESLLNTDLRQEREQIGRFMQMVVDYKYKIGFQGTLLIEPKPQEPTKHQYDYDVATVYGFLKQFGLENEIKVNIEANHATLAGHSFQHEVATAIALGILGSIDANRGDAQLGWDTDQFPNSVEENSLVMYEILKAGGFTTGGLNFDAKVRRQSIDIDDLFYGHIGAIDTMALSLKSAVKILVDGKLDEYVAQRYSGWNSELGRDILEGKMTLDEVAHYAETLVQEPKHRSGQQELLENLINRYIYD.

Residues His101 and Asp104 contribute to the active site. 7 residues coordinate Mg(2+): Glu232, Glu268, His271, Asp296, Asp307, Asp309, and Asp339.

It belongs to the xylose isomerase family. In terms of assembly, homotetramer. Mg(2+) is required as a cofactor.

It localises to the cytoplasm. It carries out the reaction alpha-D-xylose = alpha-D-xylulofuranose. The protein is Xylose isomerase of Photorhabdus laumondii subsp. laumondii (strain DSM 15139 / CIP 105565 / TT01) (Photorhabdus luminescens subsp. laumondii).